A 348-amino-acid polypeptide reads, in one-letter code: Doublesex- and mab-3-related transcription factor dmd-10 (348 aa).

2 DNA-binding regions (DM) span residues 43 to 91 (CQRC…YNQF) and 119 to 166 (CQKC…KIRR). A disordered region spans residues 316–348 (SMSMSSSPSKDDESGDEDSDGLNSNSIIDVITV).

The protein belongs to the DMRT family. In terms of tissue distribution, dimorphically expressed in the dimorphically connected interneuron AVG; expression is observed in the AVG in males, but not in hermaphrodites.

The protein localises to the nucleus. Functionally, transcription factor. Plays a role in neuronal signaling in polymodal sensory neuron ASH, downstream of sensory receptor activation. Required for maintenance of AVG synapses. This chain is Doublesex- and mab-3-related transcription factor dmd-10, found in Caenorhabditis elegans.